The chain runs to 347 residues: 8-amino-8-demethylriboflavin N,N-dimethyltransferase (347 aa).

S-adenosyl-L-methionine contacts are provided by residues Asp-209 and 235 to 237; that span reads GDF.

It belongs to the class I-like SAM-binding methyltransferase superfamily. Cation-independent O-methyltransferase family. As to quaternary structure, homodimer.

The enzyme catalyses 8-amino-8-demethylriboflavin + 2 S-adenosyl-L-methionine = roseoflavin + 2 S-adenosyl-L-homocysteine + 2 H(+). The protein operates within antibiotic biosynthesis. Catalyzes the S-adenosyl methionine-dependent conversion of 8-amino-8-demethyl-D-riboflavin (AF) into 8-methylamino-8-demethyl-D-riboflavin (MAF) and roseoflavin (RoF), the last two steps in the biosynthesis of the antibiotic roseoflavin. This Streptomyces davaonensis (strain DSM 101723 / JCM 4913 / KCC S-0913 / 768) protein is 8-amino-8-demethylriboflavin N,N-dimethyltransferase.